An 858-amino-acid polypeptide reads, in one-letter code: Taste receptor type 1 member 3 (858 aa).

A signal peptide spans 1 to 20 (MPALAIMGLSLAAFLELGMG). The Extracellular portion of the chain corresponds to 21–572 (ASLCLSQQFK…RPKFLAWGEP (552 aa)). N-linked (GlcNAc...) asparagine; when associated with variant T-60 glycosylation occurs at asparagine 58. N-linked (GlcNAc...) asparagine glycans are attached at residues asparagine 85, asparagine 130, asparagine 203, asparagine 264, asparagine 379, asparagine 387, asparagine 418, asparagine 439, and asparagine 482. A helical membrane pass occupies residues 573–593 (VVLSLLLLLCLVLGLALAALG). The Cytoplasmic segment spans residues 594-610 (LSVHHWDSPLVQASGGS). A helical membrane pass occupies residues 611-631 (QFCFGLICLGLFCLSVLLFPG). Residues 632–644 (RPSSASCLAQQPM) lie on the Extracellular side of the membrane. The chain crosses the membrane as a helical span at residues 645 to 665 (AHLPLTGCLSTLFLQAAETFV). Over 666–687 (ESELPLSWANWLCSYLRGLWAW) the chain is Cytoplasmic. The chain crosses the membrane as a helical span at residues 688 to 708 (LVVLLATFVEAALCAWYLIAF). The Extracellular portion of the chain corresponds to 709-735 (PPEVVTDWSVLPTEVLEHCHVRSWVSL). The chain crosses the membrane as a helical span at residues 736–756 (GLVHITNAMLAFLCFLGTFLV). Over 757-767 (QSQPGRYNRAR) the chain is Cytoplasmic. The chain crosses the membrane as a helical span at residues 768-788 (GLTFAMLAYFITWVSFVPLLA). Residues 789–796 (NVQVAYQP) lie on the Extracellular side of the membrane. A helical membrane pass occupies residues 797 to 817 (AVQMGAILVCALGILVTFHLP). Residues 818 to 858 (KCYVLLWLPKLNTQEFFLGRNAKKAADENSGGGEAAQGHNE) lie on the Cytoplasmic side of the membrane.

Belongs to the G-protein coupled receptor 3 family. TAS1R subfamily. In terms of assembly, forms homodimers or heterodimers with TAS1R1 and TAS1R2. Post-translationally, the Thr-60 variant is predicted to introduce a novel N-linked glycosylation site at Asn-58. The addition of even a short carbohydrate group at Asn-58 is predicted to disrupt one of the contact surfaces required for stability of a dimer. Therefore a Thr-60 variant N-glycosylated at Asn-58 is predicted to be precluded from forming homodimers or heterodimers. Expressed in circumvallate, foliate and fungiform taste papillae as well as in taste buds on the palate. Also expressed in testis. Not expressed in brain, heart, kidney, liver or spleen. The topographic distribution in various taste papillae is different from those of other T1R members.

It localises to the cell membrane. Putative taste receptor. TAS1R1/TAS1R3 responds to the umami taste stimulus (the taste of monosodium glutamate) and also to most of the 20 standard L-amino acids, but not to their D-enantiomers or other compounds. TAS1R2/TAS1R3 recognizes diverse natural and synthetic sweeteners. TAS1R3 is essential for the recognition and response to the disaccharide trehalose. Sequence differences within and between species can significantly influence the selectivity and specificity of taste responses. This Mus musculus (Mouse) protein is Taste receptor type 1 member 3 (Tas1r3).